A 958-amino-acid chain; its full sequence is Glycine dehydrogenase (decarboxylating) (958 aa).

Residue Lys705 is modified to N6-(pyridoxal phosphate)lysine.

This sequence belongs to the GcvP family. As to quaternary structure, the glycine cleavage system is composed of four proteins: P, T, L and H. Requires pyridoxal 5'-phosphate as cofactor.

The enzyme catalyses N(6)-[(R)-lipoyl]-L-lysyl-[glycine-cleavage complex H protein] + glycine + H(+) = N(6)-[(R)-S(8)-aminomethyldihydrolipoyl]-L-lysyl-[glycine-cleavage complex H protein] + CO2. In terms of biological role, the glycine cleavage system catalyzes the degradation of glycine. The P protein binds the alpha-amino group of glycine through its pyridoxal phosphate cofactor; CO(2) is released and the remaining methylamine moiety is then transferred to the lipoamide cofactor of the H protein. The polypeptide is Glycine dehydrogenase (decarboxylating) (Synechococcus sp. (strain CC9902)).